A 270-amino-acid polypeptide reads, in one-letter code: Cyclohexanol dehydrogenase (270 aa).

NAD(+) is bound by residues Arg19, Asp40, Asp78, Val79, Asn105, Tyr176, Lys180, Ile209, and Thr211. Tyr176 (proton acceptor) is an active-site residue.

The protein belongs to the short-chain dehydrogenases/reductases (SDR) family. As to quaternary structure, homodimer.

The protein resides in the cytoplasm. The catalysed reaction is cyclohexanol + NAD(+) = cyclohexanone + NADH + H(+). With respect to regulation, activity is enhanced by the addition of Ba(2+) and Mg(2+), but inhibited by the addition of Al(3+), Ca(2+), Co(2+), Cu(2+), Mn(2+) and Zn(2+). Its function is as follows. Catalyzes the oxidation of cyclohexanol to cyclohexanone. Can also use a broad range of other alcohols, including trans-cyclohexane-1,2-diol, trans-cyclopentane-1,2-diol, cyclopentanol, hexane-1,2-diol, ethanol, 1-propanol, 1-butanol, 1-pentanol and 1-hexanol. In Rhodococcus sp. (strain TK6), this protein is Cyclohexanol dehydrogenase.